The chain runs to 239 residues: MLIIAGLGNPGPKYAGNRHNIGFMAVDAIQRRQGFSAWSRKFKSEVSEGEIDGERVLLMKPQTFMNLSGEALGDAMRFYKLAPKDIVVIYDELDLPAGKARIKTGGGHGGHNGIKSIDAHCGKEYRRLRLGIGHPGVKDLVHAHVLGDFAKADQAWLSLLLEAIADNAAMLVKGEDSQLMNKIALATGGKPETEKPVAVKKQAAQSHIHQARATAQPKKLPVTGPMADMLKKMFGPKGD.

Tyr14 contributes to the tRNA binding site. His19 acts as the Proton acceptor in catalysis. TRNA-binding residues include Phe64, Asn66, and Asn112.

This sequence belongs to the PTH family. In terms of assembly, monomer.

Its subcellular location is the cytoplasm. It carries out the reaction an N-acyl-L-alpha-aminoacyl-tRNA + H2O = an N-acyl-L-amino acid + a tRNA + H(+). In terms of biological role, hydrolyzes ribosome-free peptidyl-tRNAs (with 1 or more amino acids incorporated), which drop off the ribosome during protein synthesis, or as a result of ribosome stalling. Its function is as follows. Catalyzes the release of premature peptidyl moieties from peptidyl-tRNA molecules trapped in stalled 50S ribosomal subunits, and thus maintains levels of free tRNAs and 50S ribosomes. The protein is Peptidyl-tRNA hydrolase of Rhizobium meliloti (strain 1021) (Ensifer meliloti).